The chain runs to 283 residues: uncharacterized protein (283 aa).

Gly2 carries the N-myristoyl glycine; by host lipid modification. N-linked (GlcNAc...) asparagine; by host glycosylation is found at Asn31, Asn95, Asn105, Asn108, Asn137, and Asn147. The next 2 helical transmembrane spans lie at Ile181–Phe201 and Phe250–Pro270. The N-linked (GlcNAc...) asparagine; by host glycan is linked to Asn277.

It is found in the membrane. This is an uncharacterized protein from Acanthamoeba polyphaga (Amoeba).